A 505-amino-acid polypeptide reads, in one-letter code: ATP synthase subunit alpha (505 aa).

The tract at residues 118 to 138 (VDGLGPINTTNTRPIESPAPG) is disordered. An ATP-binding site is contributed by 172–179 (GDRQTGKT).

Belongs to the ATPase alpha/beta chains family. F-type ATPases have 2 components, CF(1) - the catalytic core - and CF(0) - the membrane proton channel. CF(1) has five subunits: alpha(3), beta(3), gamma(1), delta(1), epsilon(1). CF(0) has three main subunits: a(1), b(2) and c(9-12). The alpha and beta chains form an alternating ring which encloses part of the gamma chain. CF(1) is attached to CF(0) by a central stalk formed by the gamma and epsilon chains, while a peripheral stalk is formed by the delta and b chains.

The protein localises to the cell membrane. The enzyme catalyses ATP + H2O + 4 H(+)(in) = ADP + phosphate + 5 H(+)(out). Its function is as follows. Produces ATP from ADP in the presence of a proton gradient across the membrane. The alpha chain is a regulatory subunit. The chain is ATP synthase subunit alpha from Bacillus cereus (strain ATCC 14579 / DSM 31 / CCUG 7414 / JCM 2152 / NBRC 15305 / NCIMB 9373 / NCTC 2599 / NRRL B-3711).